Reading from the N-terminus, the 187-residue chain is Calmodulin-like protein 30 (187 aa).

The disordered stretch occupies residues 21–47; that stretch reads KPSRMFSRDRQSSGLSSPGPGGFSQPS. Positions 32–47 are enriched in low complexity; the sequence is SSGLSSPGPGGFSQPS. EF-hand domains are found at residues 46–81, 82–117, 129–152, and 153–187; these read PSVN…LGQE, RAIE…SGGI, FDLN…LGER, and CSLE…SNNV. Residues aspartate 59, aspartate 61, aspartate 63, lysine 65, glutamate 70, aspartate 95, aspartate 97, aspartate 99, glutamate 106, aspartate 130, asparagine 132, aspartate 134, lysine 136, glutamate 141, aspartate 166, aspartate 168, aspartate 170, and glutamate 177 each contribute to the Ca(2+) site.

The protein belongs to the calmodulin family.

Its function is as follows. Potential calcium sensor. This Arabidopsis thaliana (Mouse-ear cress) protein is Calmodulin-like protein 30.